Here is a 485-residue protein sequence, read N- to C-terminus: Ribosomal protein S6 kinase beta-2 (485 aa).

A disordered region spans residues 1-26; that stretch reads MAAVFDLDLETEEGSEGEGEPEFSPA. The segment covering 7 to 21 has biased composition (acidic residues); the sequence is LDLETEEGSEGEGEP. Serine 15 is subject to Phosphoserine. The Protein kinase domain maps to 67–328; it reads FELLSVLGKG…AADVQRHPFF (262 aa). ATP contacts are provided by residues 73–81 and lysine 99; that span reads LGKGGYGKV. Residue aspartate 194 is the Proton acceptor of the active site. The AGC-kinase C-terminal domain occupies 329–399; the sequence is RHINWDDLLA…VAPSVLDSIK (71 aa). The interval 407–485 is disordered; it reads KLRSPRRLNS…SKKGRGRSGR (79 aa). The residue at position 417 (serine 417) is a Phosphoserine. Residue threonine 420 is modified to Phosphothreonine. At serine 423 the chain carries Phosphoserine. Positions 436–469 are enriched in pro residues; that stretch reads SPGPPEPMEPSLPPLLPSPPSPPPTSTAPLPIRP. The Nuclear localization signal motif lies at 474 to 480; it reads KKSKKGR. Over residues 474–485 the composition is skewed to basic residues; the sequence is KKSKKGRGRSGR. Residue serine 476 is modified to Phosphoserine; by PKC.

This sequence belongs to the protein kinase superfamily. AGC Ser/Thr protein kinase family. S6 kinase subfamily. In terms of processing, phosphorylated and activated by MTOR. Phosphorylation by PKC within the NLS in response to mitogenic stimuli causes cytoplasmic retention.

It localises to the cytoplasm. It is found in the nucleus. It catalyses the reaction L-seryl-[protein] + ATP = O-phospho-L-seryl-[protein] + ADP + H(+). The enzyme catalyses L-threonyl-[protein] + ATP = O-phospho-L-threonyl-[protein] + ADP + H(+). In terms of biological role, phosphorylates specifically ribosomal protein S6. Seems to act downstream of mTOR signaling in response to growth factors and nutrients to promote cell proliferation, cell growth and cell cycle progression in an alternative pathway regulated by MEAK7. This Mus musculus (Mouse) protein is Ribosomal protein S6 kinase beta-2 (Rps6kb2).